A 209-amino-acid chain; its full sequence is MLETMRRHGITLAIFAALTTGLTAVVNSLTKSTIAEQAALQHKSLLDQVIPPALYDNDIQNECYLVNANALGNNLPHRLYLARKNGHPVAAALESTAPDGYSGAIQLLVGADFSGKVLGVRVTEHHETPGLGDKIETRISNWINVFSGKTITSNHDQHWAVKKDGGEFDQFTGATITPRAVVNSVKRTALYLQTIPEHLSSLESCGEKS.

A helical membrane pass occupies residues 9–29 (GITLAIFAALTTGLTAVVNSL). Thr-175 is subject to FMN phosphoryl threonine.

It belongs to the RnfG family. As to quaternary structure, the complex is composed of six subunits: RnfA, RnfB, RnfC, RnfD, RnfE and RnfG. FMN is required as a cofactor.

It localises to the cell inner membrane. In terms of biological role, part of a membrane-bound complex that couples electron transfer with translocation of ions across the membrane. The protein is Ion-translocating oxidoreductase complex subunit G of Photorhabdus laumondii subsp. laumondii (strain DSM 15139 / CIP 105565 / TT01) (Photorhabdus luminescens subsp. laumondii).